Reading from the N-terminus, the 217-residue chain is MQPEFWHKKWESNQIGFHQLEVNPYLQRHWPDLAIPVQARVLVPLCGKSLDLLWLAGRGHQVLGVELSEKAVEDFFHEQQLQPQVSEQGDFKVYRADAVELWCGDFFSLTMADVAGCTALYDRAAVIALPPAMRERYAAHLQSILPACRGLLVTLDYDQSQMPGPPFSVDDAEVQRLLGSVWRVEMLEQQDVLGDSWKFVQAGVTRLEERVYRIRGV.

S-adenosyl-L-methionine contacts are provided by tryptophan 10, leucine 45, glutamate 66, and arginine 123.

It belongs to the class I-like SAM-binding methyltransferase superfamily. TPMT family.

Its subcellular location is the cytoplasm. It catalyses the reaction S-adenosyl-L-methionine + a thiopurine = S-adenosyl-L-homocysteine + a thiopurine S-methylether.. This Pseudomonas fluorescens (strain Pf0-1) protein is Thiopurine S-methyltransferase.